Reading from the N-terminus, the 336-residue chain is MLSYAPENAYQRASTMENKKVFPKEKSGLHPRNRHRSRYDFDALSVSCPELIPFLTPTAYGDISVDFADPLAVKMLNKALLKHFYGIEYWDIPADSLCPPIPGRADYVHHLADLLASCNGEVIPKGKNIALLDIGVGANCIYPIIGQREYGWRFTGTDIDSHALSAAKMVVSMNPTLKNTLRLKQQKDPHAIFEGVWAVNERYDATLCNPPFHGSAEEAAATTRRKLHKLGKNEVAAKPVQNFGGKNSELWCEGGEEGFVSRMVAESVAKAQNCFWFTSLISKKTTLPAIYHALRYVKAVEVRTIEMAQGQKVSRFVAWTFLTPEQQAAWVAERWA.

Belongs to the methyltransferase superfamily. METTL16/RlmF family.

The protein resides in the cytoplasm. It catalyses the reaction adenosine(1618) in 23S rRNA + S-adenosyl-L-methionine = N(6)-methyladenosine(1618) in 23S rRNA + S-adenosyl-L-homocysteine + H(+). In terms of biological role, specifically methylates the adenine in position 1618 of 23S rRNA. This Yersinia pestis bv. Antiqua (strain Angola) protein is Ribosomal RNA large subunit methyltransferase F.